An 861-amino-acid polypeptide reads, in one-letter code: DNA mismatch repair protein MutS (861 aa).

618 to 625 is a binding site for ATP; sequence GPNMGGKS.

Belongs to the DNA mismatch repair MutS family.

Its function is as follows. This protein is involved in the repair of mismatches in DNA. It is possible that it carries out the mismatch recognition step. This protein has a weak ATPase activity. The polypeptide is DNA mismatch repair protein MutS (Shewanella sp. (strain ANA-3)).